A 335-amino-acid polypeptide reads, in one-letter code: Fructose-1,6-bisphosphatase class 1 (335 aa).

Mg(2+)-binding residues include E90, D113, L115, and D116. Substrate is bound by residues 116–119, N209, Y242, and K272; that span reads DGSS. E278 lines the Mg(2+) pocket.

Belongs to the FBPase class 1 family. As to quaternary structure, homotetramer. The cofactor is Mg(2+).

The protein resides in the cytoplasm. It catalyses the reaction beta-D-fructose 1,6-bisphosphate + H2O = beta-D-fructose 6-phosphate + phosphate. Its pathway is carbohydrate biosynthesis; gluconeogenesis. This is Fructose-1,6-bisphosphatase class 1 from Mannheimia succiniciproducens (strain KCTC 0769BP / MBEL55E).